A 342-amino-acid polypeptide reads, in one-letter code: Oxygen-dependent coproporphyrinogen-III oxidase (342 aa).

Position 98 (serine 98) interacts with substrate. Histidine 102 and histidine 112 together coordinate a divalent metal cation. Catalysis depends on histidine 112, which acts as the Proton donor. A substrate-binding site is contributed by 114–116 (NYR). A divalent metal cation-binding residues include histidine 146 and histidine 176. An important for dimerization region spans residues 266 to 301 (YVEFNLVWDRGTIFGLQTNGRTESILMSLPPLARWE).

It belongs to the aerobic coproporphyrinogen-III oxidase family. In terms of assembly, homodimer. A divalent metal cation is required as a cofactor.

Its subcellular location is the cytoplasm. It catalyses the reaction coproporphyrinogen III + O2 + 2 H(+) = protoporphyrinogen IX + 2 CO2 + 2 H2O. It functions in the pathway porphyrin-containing compound metabolism; protoporphyrin-IX biosynthesis; protoporphyrinogen-IX from coproporphyrinogen-III (O2 route): step 1/1. Its function is as follows. Involved in the heme and chlorophyll biosynthesis. Catalyzes the aerobic oxidative decarboxylation of propionate groups of rings A and B of coproporphyrinogen-III to yield the vinyl groups in protoporphyrinogen-IX. The polypeptide is Oxygen-dependent coproporphyrinogen-III oxidase (Prochlorococcus marinus (strain MIT 9301)).